The primary structure comprises 100 residues: Class II hydrophobin 4 (100 aa).

The N-terminal stretch at 1 to 17 is a signal peptide; the sequence is MQFYAIASLFLAGTAFA. Intrachain disulfides connect C29-C79, C40-C70, C41-C53, and C80-C92.

It belongs to the cerato-ulmin hydrophobin family.

The protein resides in the secreted. It is found in the cell wall. Functionally, aerial growth, conidiation, and dispersal of filamentous fungi in the environment rely upon a capability of their secreting small amphipathic proteins called hydrophobins (HPBs) with low sequence identity. Class I can self-assemble into an outermost layer of rodlet bundles on aerial cell surfaces, conferring cellular hydrophobicity that supports fungal growth, development and dispersal; whereas Class II form highly ordered films at water-air interfaces through intermolecular interactions but contribute nothing to the rodlet structure. Does not seem to be important for the ability to cause seedling disease. The sequence is that of Class II hydrophobin 4 from Gibberella moniliformis (Maize ear and stalk rot fungus).